The primary structure comprises 295 residues: Mediator of RNA polymerase II transcription subunit 27 (295 aa).

This sequence belongs to the Mediator complex subunit 27 family. Component of the Mediator complex.

It is found in the nucleus. In terms of biological role, component of the Mediator complex, a coactivator involved in the regulated transcription of nearly all RNA polymerase II-dependent genes. Mediator functions as a bridge to convey information from gene-specific regulatory proteins to the basal RNA polymerase II transcription machinery. Mediator is recruited to promoters by direct interactions with regulatory proteins and serves as a scaffold for the assembly of a functional preinitiation complex with RNA polymerase II and the general transcription factors. In Anopheles gambiae (African malaria mosquito), this protein is Mediator of RNA polymerase II transcription subunit 27 (MED27).